A 248-amino-acid polypeptide reads, in one-letter code: Exosome complex component Rrp41 (248 aa).

It belongs to the RNase PH family. Rrp41 subfamily. Component of the archaeal exosome complex. Forms a hexameric ring-like arrangement composed of 3 Rrp41-Rrp42 heterodimers. The hexameric ring associates with a trimer of Rrp4 and/or Csl4 subunits.

It localises to the cytoplasm. Its function is as follows. Catalytic component of the exosome, which is a complex involved in RNA degradation. Has 3'-&gt;5' exoribonuclease activity. Can also synthesize heteromeric RNA-tails. The chain is Exosome complex component Rrp41 from Thermoplasma acidophilum (strain ATCC 25905 / DSM 1728 / JCM 9062 / NBRC 15155 / AMRC-C165).